A 173-amino-acid chain; its full sequence is Photosystem I assembly protein Ycf3 (173 aa).

TPR repeat units lie at residues 35–68, 72–105, and 120–153; these read AFAY…EDDP, SYIL…NPRM, and GEKA…APNN.

It belongs to the Ycf3 family.

It localises to the cellular thylakoid membrane. Functionally, essential for the assembly of the photosystem I (PSI) complex. May act as a chaperone-like factor to guide the assembly of the PSI subunits. In Trichodesmium erythraeum (strain IMS101), this protein is Photosystem I assembly protein Ycf3.